A 259-amino-acid chain; its full sequence is tRNA (guanine-N(1)-)-methyltransferase (259 aa).

Residues G117 and 137–142 (LGDFVL) contribute to the S-adenosyl-L-methionine site.

It belongs to the RNA methyltransferase TrmD family. Homodimer.

It localises to the cytoplasm. It carries out the reaction guanosine(37) in tRNA + S-adenosyl-L-methionine = N(1)-methylguanosine(37) in tRNA + S-adenosyl-L-homocysteine + H(+). Functionally, specifically methylates guanosine-37 in various tRNAs. The polypeptide is tRNA (guanine-N(1)-)-methyltransferase (Polaromonas sp. (strain JS666 / ATCC BAA-500)).